A 228-amino-acid polypeptide reads, in one-letter code: Ureidoacrylate amidohydrolase RutB (228 aa).

D23 (proton acceptor) is an active-site residue. Residue K132 is part of the active site. The Nucleophile role is filled by C165.

The protein belongs to the isochorismatase family. RutB subfamily.

The catalysed reaction is (Z)-3-ureidoacrylate + H2O + H(+) = (Z)-3-aminoacrylate + NH4(+) + CO2. It catalyses the reaction (Z)-3-ureidoacrylate + H2O = (Z)-3-aminoacrylate + carbamate + H(+). It carries out the reaction (Z)-2-methylureidoacrylate + H2O + H(+) = (Z)-2-methylaminoacrylate + NH4(+) + CO2. Its function is as follows. Hydrolyzes ureidoacrylate to form aminoacrylate and carbamate. The carbamate hydrolyzes spontaneously, thereby releasing one of the nitrogen atoms of the pyrimidine ring as ammonia and one of its carbon atoms as CO2. This Agrobacterium fabrum (strain C58 / ATCC 33970) (Agrobacterium tumefaciens (strain C58)) protein is Ureidoacrylate amidohydrolase RutB.